Here is a 227-residue protein sequence, read N- to C-terminus: Ribose-5-phosphate isomerase A (227 aa).

Residues 26–29, 82–85, and 95–98 contribute to the substrate site; these read TGST, DGAD, and KGGG. Residue Glu-104 is the Proton acceptor of the active site. Residue Lys-122 participates in substrate binding.

Belongs to the ribose 5-phosphate isomerase family. As to quaternary structure, homodimer.

It carries out the reaction aldehydo-D-ribose 5-phosphate = D-ribulose 5-phosphate. It functions in the pathway carbohydrate degradation; pentose phosphate pathway; D-ribose 5-phosphate from D-ribulose 5-phosphate (non-oxidative stage): step 1/1. Catalyzes the reversible conversion of ribose-5-phosphate to ribulose 5-phosphate. This is Ribose-5-phosphate isomerase A from Streptococcus pneumoniae (strain ATCC 700669 / Spain 23F-1).